The following is a 253-amino-acid chain: Triosephosphate isomerase (253 aa).

9–11 (NWK) is a binding site for substrate. H95 acts as the Electrophile in catalysis. The active-site Proton acceptor is E167. Residues G173, S213, and 234–235 (GG) contribute to the substrate site. The residue at position 213 (S213) is a Phosphoserine.

The protein belongs to the triosephosphate isomerase family. Homodimer.

Its subcellular location is the cytoplasm. The catalysed reaction is D-glyceraldehyde 3-phosphate = dihydroxyacetone phosphate. It participates in carbohydrate biosynthesis; gluconeogenesis. Its pathway is carbohydrate degradation; glycolysis; D-glyceraldehyde 3-phosphate from glycerone phosphate: step 1/1. Involved in the gluconeogenesis. Catalyzes stereospecifically the conversion of dihydroxyacetone phosphate (DHAP) to D-glyceraldehyde-3-phosphate (G3P). The sequence is that of Triosephosphate isomerase from Bacillus subtilis (strain 168).